A 396-amino-acid chain; its full sequence is Digeranylgeranylglycerophospholipid reductase (396 aa).

FAD-binding residues include Gly14, Glu33, Cys44, Gly45, Gly47, Arg100, Ala124, Glu162, Asp283, Gly295, and Ile296. Residues Lys338 and Val374 each coordinate a 2,3-bis-O-(geranylgeranyl)-sn-glycerol 1-phospholipid.

Belongs to the geranylgeranyl reductase family. DGGGPL reductase subfamily. Monomer. FAD serves as cofactor.

The protein localises to the cell membrane. The enzyme catalyses 2,3-bis-O-(phytanyl)-sn-glycerol 1-phosphate + 8 NADP(+) = 2,3-bis-O-(geranylgeranyl)-sn-glycerol 1-phosphate + 8 NADPH + 8 H(+). It catalyses the reaction 2,3-bis-O-(phytanyl)-sn-glycerol 1-phosphate + 8 NAD(+) = 2,3-bis-O-(geranylgeranyl)-sn-glycerol 1-phosphate + 8 NADH + 8 H(+). It carries out the reaction a 2,3-bis-O-phytanyl-sn-glycerol 1-phospholipid + 8 A = a 2,3-bis-O-(geranylgeranyl)-sn-glycerol 1-phospholipid + 8 AH2. The catalysed reaction is CDP-2,3-bis-O-(geranylgeranyl)-sn-glycerol + 8 AH2 = CDP-2,3-bis-O-(phytanyl)-sn-glycerol + 8 A. The enzyme catalyses archaetidylserine + 8 AH2 = 2,3-bis-O-phytanyl-sn-glycero-3-phospho-L-serine + 8 A. It participates in membrane lipid metabolism; glycerophospholipid metabolism. Functionally, is involved in the reduction of 2,3-digeranylgeranylglycerophospholipids (unsaturated archaeols) into 2,3-diphytanylglycerophospholipids (saturated archaeols) in the biosynthesis of archaeal membrane lipids. Catalyzes the formation of archaetidic acid (2,3-di-O-phytanyl-sn-glyceryl phosphate) from 2,3-di-O-geranylgeranylglyceryl phosphate (DGGGP) via the hydrogenation of each double bond of the isoprenoid chains. Can use both NADH and NADPH as electron donors. Also catalyzes the reduction of 2,3-di-O-geranylgeranylglyceryl phosphate analogs such as 2,3-di-O-phytyl-sn-glyceryl phosphate (DPHGP), 3-O-(2,3-di-O-phytyl-sn-glycero-phospho)-sn-glycerol (DPHGPG) and 2,3-di-O-phytyl-sn-glycero-phosphoethanolamine (DPHGPE). Is not active toward 2,3-di-O-geranylgeranylglycerol. Is also probably able to reduce double bonds of geranyl groups in CDP-2,3-bis-O-(geranylgeranyl)-sn-glycerol and archaetidylserine, thus acting at various stages in the biosynthesis of archaeal membrane lipids. The protein is Digeranylgeranylglycerophospholipid reductase of Thermoplasma acidophilum (strain ATCC 25905 / DSM 1728 / JCM 9062 / NBRC 15155 / AMRC-C165).